The chain runs to 201 residues: Small ribosomal subunit protein uS4c (201 aa).

Residues 89-157 (MRLDNILFRL…VQNYIASSDP (69 aa)) form the S4 RNA-binding domain.

The protein belongs to the universal ribosomal protein uS4 family. Part of the 30S ribosomal subunit. Contacts protein S5. The interaction surface between S4 and S5 is involved in control of translational fidelity.

It is found in the plastid. It localises to the chloroplast. Its function is as follows. One of the primary rRNA binding proteins, it binds directly to 16S rRNA where it nucleates assembly of the body of the 30S subunit. Functionally, with S5 and S12 plays an important role in translational accuracy. The polypeptide is Small ribosomal subunit protein uS4c (rps4) (Hordeum vulgare (Barley)).